Reading from the N-terminus, the 655-residue chain is Probable glucan endo-1,3-beta-glucosidase btgC (655 aa).

Disordered stretches follow at residues 1–61 (MSGD…ATPG) and 89–114 (SGVD…PGSD). Topologically, residues 1-282 (MSGDPRSFSF…PKPGTGSRKR (282 aa)) are cytoplasmic. Residues 19 to 33 (DSSQQPLHPTNTMAD) are compositionally biased toward polar residues. The span at 89-98 (SGVDAFRDTD) shows a compositional bias: basic and acidic residues. A helical; Signal-anchor for type II membrane protein transmembrane segment spans residues 283-303 (GWIVGIILAVVIVGAIVGGAV). Over 304 to 655 (GGTLGNREKE…IPDCGGKTAT (352 aa)) the chain is Extracellular. A disordered region spans residues 305 to 338 (GTLGNREKESPSSSETASGDEKVNGDLGKDSDEI). The span at 323–338 (GDEKVNGDLGKDSDEI) shows a compositional bias: basic and acidic residues. N-linked (GlcNAc...) asparagine glycosylation is present at Asn426. The Proton donor role is filled by Glu458. The active-site Nucleophile is Glu557. N-linked (GlcNAc...) asparagine glycans are attached at residues Asn576 and Asn602.

It belongs to the glycosyl hydrolase 17 family.

It is found in the cell membrane. It carries out the reaction Hydrolysis of (1-&gt;3)-beta-D-glucosidic linkages in (1-&gt;3)-beta-D-glucans.. Functionally, glucanases play a role in cell expansion during growth, in cell-cell fusion during mating, and in spore release during sporulation. This enzyme may be involved in beta-glucan degradation. Active on laminarin and lichenan. The protein is Probable glucan endo-1,3-beta-glucosidase btgC (btgC) of Aspergillus terreus (strain NIH 2624 / FGSC A1156).